The sequence spans 379 residues: Homoserine O-succinyltransferase (379 aa).

The AB hydrolase-1 domain occupies 48–357 (NAVLICHALS…SAHGHDAFLM (310 aa)). Serine 154 acts as the Nucleophile in catalysis. Arginine 224 is a binding site for substrate. Active-site residues include aspartate 319 and histidine 352. A substrate-binding site is contributed by aspartate 353.

The protein belongs to the AB hydrolase superfamily. MetX family. As to quaternary structure, homodimer.

The protein resides in the cytoplasm. It carries out the reaction L-homoserine + succinyl-CoA = O-succinyl-L-homoserine + CoA. The protein operates within amino-acid biosynthesis; L-methionine biosynthesis via de novo pathway; O-succinyl-L-homoserine from L-homoserine: step 1/1. Activity increases in the presence of MetW. Functionally, transfers a succinyl group from succinyl-CoA to L-homoserine, forming succinyl-L-homoserine. This chain is Homoserine O-succinyltransferase, found in Neisseria gonorrhoeae.